Reading from the N-terminus, the 430-residue chain is Serine--tRNA ligase (430 aa).

Residue 237-239 participates in L-serine binding; sequence TAE. 268–270 is a binding site for ATP; it reads RSE. Glu291 is a binding site for L-serine. 355 to 358 contacts ATP; it reads EISS. Ser391 is a binding site for L-serine.

The protein belongs to the class-II aminoacyl-tRNA synthetase family. Type-1 seryl-tRNA synthetase subfamily. Homodimer. The tRNA molecule binds across the dimer.

The protein localises to the cytoplasm. The catalysed reaction is tRNA(Ser) + L-serine + ATP = L-seryl-tRNA(Ser) + AMP + diphosphate + H(+). It carries out the reaction tRNA(Sec) + L-serine + ATP = L-seryl-tRNA(Sec) + AMP + diphosphate + H(+). The protein operates within aminoacyl-tRNA biosynthesis; selenocysteinyl-tRNA(Sec) biosynthesis; L-seryl-tRNA(Sec) from L-serine and tRNA(Sec): step 1/1. Its function is as follows. Catalyzes the attachment of serine to tRNA(Ser). Is also able to aminoacylate tRNA(Sec) with serine, to form the misacylated tRNA L-seryl-tRNA(Sec), which will be further converted into selenocysteinyl-tRNA(Sec). This chain is Serine--tRNA ligase, found in Yersinia enterocolitica serotype O:8 / biotype 1B (strain NCTC 13174 / 8081).